A 379-amino-acid chain; its full sequence is Succinyl-diaminopimelate desuccinylase (379 aa).

Histidine 70 is a Zn(2+) binding site. Aspartate 72 is an active-site residue. Residue aspartate 103 coordinates Zn(2+). Glutamate 137 functions as the Proton acceptor in the catalytic mechanism. Glutamate 138, glutamate 166, and histidine 352 together coordinate Zn(2+).

It belongs to the peptidase M20A family. DapE subfamily. As to quaternary structure, homodimer. Requires Zn(2+) as cofactor. Co(2+) serves as cofactor.

It catalyses the reaction N-succinyl-(2S,6S)-2,6-diaminopimelate + H2O = (2S,6S)-2,6-diaminopimelate + succinate. Its pathway is amino-acid biosynthesis; L-lysine biosynthesis via DAP pathway; LL-2,6-diaminopimelate from (S)-tetrahydrodipicolinate (succinylase route): step 3/3. Catalyzes the hydrolysis of N-succinyl-L,L-diaminopimelic acid (SDAP), forming succinate and LL-2,6-diaminopimelate (DAP), an intermediate involved in the bacterial biosynthesis of lysine and meso-diaminopimelic acid, an essential component of bacterial cell walls. The protein is Succinyl-diaminopimelate desuccinylase of Shewanella baltica (strain OS223).